The following is a 447-amino-acid chain: MIKIYDTMTRSLRKFVPLTENTVNMYVCGPTVYNYIHIGNARSAVAFDTIRRYFEYTGYQVNYISNFTDVDDKIIKAATQAGVSPKELSDRFIAAFIEDTKALGVKPATQNPRVMDYIAEIISFVESLIEKDFAYEADGDVYFRVEKSEHYAKLANKTLSELEVGASGRTDAETALKENPLDFALWKSAKAGEVSWDSPWGFGRPGWHIECSVMATEILGDTIDIHGGGADLEFPHHTNEIAQSEAKTGKTFANYWMHNGFVTVDNEKMSKSLGNFVTVHDMLQTVDGQVLRFFLATQQYRKPINFTEKAIHDAEINLKYLKNTLQQPLTETADEQELKQFVIAFQDAMDDDFNTANGITVVFDMAKWINSGSYTEPVKSAFEKMLAVFGIVFEEEVLEVDIEALIAKRQEARANRDFATADAIRDQLAAQGIKLLDTKDGVRWLRD.

Cys-28 provides a ligand contact to Zn(2+). The short motif at 30–40 is the 'HIGH' region element; sequence PTVYNYIHIGN. Cys-211, His-236, and Glu-240 together coordinate Zn(2+). The short motif at 268–272 is the 'KMSKS' region element; it reads KMSKS. Lys-271 lines the ATP pocket.

The protein belongs to the class-I aminoacyl-tRNA synthetase family. Monomer. It depends on Zn(2+) as a cofactor.

The protein resides in the cytoplasm. The enzyme catalyses tRNA(Cys) + L-cysteine + ATP = L-cysteinyl-tRNA(Cys) + AMP + diphosphate. The sequence is that of Cysteine--tRNA ligase from Streptococcus pyogenes serotype M6 (strain ATCC BAA-946 / MGAS10394).